The sequence spans 328 residues: Nickel import system permease protein NikB (328 aa).

6 helical membrane passes run 11 to 31 (LMQMIVVLFVISTLTFILMKL), 104 to 124 (LLISFSTLVLSLCISIPLGII), 139 to 159 (VISTLSISLPAFFIGIILLFI), 170 to 190 (ILSQFILPVITLSLGMCAYII), 229 to 249 (ILPIIPLLGISLGSLIGGTVV), and 279 to 299 (VLFIGFFVVIINTIADLLTLL). The ABC transmembrane type-1 domain maps to 100–297 (APITLLISFS…IINTIADLLT (198 aa)).

Belongs to the binding-protein-dependent transport system permease family. OppBC subfamily. The complex is composed of two ATP-binding proteins (NikD and NikE), two transmembrane proteins (NikB and NikC) and a solute-binding protein (NikA).

It is found in the cell membrane. In terms of biological role, part of the ABC transporter complex NikABCDE (Opp2) involved in nickel import. Probably responsible for the translocation of the substrate across the membrane. This Staphylococcus aureus (strain bovine RF122 / ET3-1) protein is Nickel import system permease protein NikB.